A 178-amino-acid chain; its full sequence is NADH-ubiquinone oxidoreductase chain 6 (178 aa).

Helical transmembrane passes span 1–21, 25–45, 48–68, 89–109, and 152–172; these read MMTY…VGFS, SPIY…GIVL, GGSF…LVVF, VLLT…YLLL, and YGYW…IVVM.

The protein belongs to the complex I subunit 6 family.

It is found in the mitochondrion membrane. It carries out the reaction a ubiquinone + NADH + 5 H(+)(in) = a ubiquinol + NAD(+) + 4 H(+)(out). Its function is as follows. Core subunit of the mitochondrial membrane respiratory chain NADH dehydrogenase (Complex I) that is believed to belong to the minimal assembly required for catalysis. Complex I functions in the transfer of electrons from NADH to the respiratory chain. The immediate electron acceptor for the enzyme is believed to be ubiquinone. This is NADH-ubiquinone oxidoreductase chain 6 (MT-ND6) from Pseudosoriculus fumidus (Taiwanese brown-toothed shrew).